The following is an 87-amino-acid chain: Small ribosomal subunit protein bS20 (87 aa).

Residues 1 to 25 form a disordered region; the sequence is MANIKSAKKRAVQSEKRRKHNASRR.

It belongs to the bacterial ribosomal protein bS20 family.

Binds directly to 16S ribosomal RNA. This Yersinia pseudotuberculosis serotype O:1b (strain IP 31758) protein is Small ribosomal subunit protein bS20.